The following is a 644-amino-acid chain: Prolyl 3,4-dihydroxylase TPA1 (644 aa).

Residues 141–247 (SKTDMSINTY…RLSIQGWYHI (107 aa)) form the Fe2OG dioxygenase domain. Residues His159 and Asp161 each coordinate Fe cation. Tyr173 provides a ligand contact to 2-oxoglutarate. His227 serves as a coordination point for Fe cation. Arg238 lines the 2-oxoglutarate pocket. Phosphoserine is present on Ser607.

It belongs to the TPA1 family. In terms of assembly, monomer and homodimer. Interacts with FRK1, eRF1 (SUP1), eRF3 (SUP35) and polyadenylate-binding protein PAB1. Interacts with ETT1. The cofactor is Fe(2+). It depends on L-ascorbate as a cofactor.

The protein localises to the nucleus. The catalysed reaction is [ribosomal protein uS12]-L-proline + 2-oxoglutarate + O2 = [ribosomal protein uS12]-(3S)-3-hydroxy-L-proline + succinate + CO2. It catalyses the reaction [ribosomal protein uS12]-(3S)-3-hydroxy-L-proline + 2-oxoglutarate + O2 = [ribosomal protein uS12]-(3S)-3,4-dihydroxy-L-proline + succinate + CO2. Functionally, prolyl 3,4-dihydroxylase that catalyzes 3,4-dihydroxylation of 'Pro-64' of small ribosomal subunit uS12 (RPS23A and RPS23B), thereby regulating protein translation termination efficiency. Part of a messenger ribonucleoprotein (mRNP) complex at the 3'-UTR of mRNAs. It associates specifically with components of the translation termination complex and is involved in both translation termination and in regulation of normal mRNA decay through translation termination-coupled poly(A) shortening. The sequence is that of Prolyl 3,4-dihydroxylase TPA1 from Saccharomyces cerevisiae (strain ATCC 204508 / S288c) (Baker's yeast).